A 253-amino-acid chain; its full sequence is Indole-3-glycerol phosphate synthase (253 aa).

It belongs to the TrpC family.

The catalysed reaction is 1-(2-carboxyphenylamino)-1-deoxy-D-ribulose 5-phosphate + H(+) = (1S,2R)-1-C-(indol-3-yl)glycerol 3-phosphate + CO2 + H2O. The protein operates within amino-acid biosynthesis; L-tryptophan biosynthesis; L-tryptophan from chorismate: step 4/5. This chain is Indole-3-glycerol phosphate synthase, found in Bacillus cereus (strain ATCC 14579 / DSM 31 / CCUG 7414 / JCM 2152 / NBRC 15305 / NCIMB 9373 / NCTC 2599 / NRRL B-3711).